Here is a 686-residue protein sequence, read N- to C-terminus: Potassium-transporting ATPase ATP-binding subunit (686 aa).

The next 2 helical transmembrane spans lie at 38-58 (VMFV…KDLV) and 64-84 (AAPL…VLFA). Residues 101–123 (ALRKMRKETTARRWKDGREERVP) are disordered. Positions 107-123 (KETTARRWKDGREERVP) are enriched in basic and acidic residues. Transmembrane regions (helical) follow at residues 224 to 244 (ILLV…VPLA) and 257 to 277 (VALL…AIGI). Catalysis depends on D308, which acts as the 4-aspartylphosphate intermediate. Residues D345, E349, 378-385 (FTAQTRMS), and K399 each bind ATP. Residues D522 and D526 each contribute to the Mg(2+) site. 3 helical membrane-spanning segments follow: residues 592–612 (FAIL…LNVM), 620–640 (AVLS…PLAL), and 666–686 (VIVP…VGLA).

Belongs to the cation transport ATPase (P-type) (TC 3.A.3) family. Type IA subfamily. The system is composed of three essential subunits: KdpA, KdpB and KdpC.

Its subcellular location is the cell membrane. It carries out the reaction K(+)(out) + ATP + H2O = K(+)(in) + ADP + phosphate + H(+). Functionally, part of the high-affinity ATP-driven potassium transport (or Kdp) system, which catalyzes the hydrolysis of ATP coupled with the electrogenic transport of potassium into the cytoplasm. This subunit is responsible for energy coupling to the transport system and for the release of the potassium ions to the cytoplasm. This Myxococcus xanthus protein is Potassium-transporting ATPase ATP-binding subunit.